The sequence spans 467 residues: Ribosomal protein uS12 methylthiotransferase RimO (467 aa).

Residues 1–27 are disordered; it reads MTSNPPDLRPDLAPKPTFGTAPRPDQP. One can recognise an MTTase N-terminal domain in the interval 27–137; the sequence is PTLGMVSLGC…VLDAVHAAVP (111 aa). Residues cysteine 36, cysteine 72, cysteine 101, cysteine 168, cysteine 172, and cysteine 175 each coordinate [4Fe-4S] cluster. Residues 154–397 enclose the Radical SAM core domain; the sequence is LTPRHFSYLK…MEKAQAISEA (244 aa). In terms of domain architecture, TRAM spans 400-467; it reads ASKVGQTLQV…GEYDLWGALR (68 aa).

This sequence belongs to the methylthiotransferase family. RimO subfamily. It depends on [4Fe-4S] cluster as a cofactor.

It is found in the cytoplasm. It catalyses the reaction L-aspartate(89)-[ribosomal protein uS12]-hydrogen + (sulfur carrier)-SH + AH2 + 2 S-adenosyl-L-methionine = 3-methylsulfanyl-L-aspartate(89)-[ribosomal protein uS12]-hydrogen + (sulfur carrier)-H + 5'-deoxyadenosine + L-methionine + A + S-adenosyl-L-homocysteine + 2 H(+). Catalyzes the methylthiolation of an aspartic acid residue of ribosomal protein uS12. This is Ribosomal protein uS12 methylthiotransferase RimO from Ruegeria sp. (strain TM1040) (Silicibacter sp.).